The primary structure comprises 105 residues: Replication initiation control protein YabA (105 aa).

Histidine 79, cysteine 81, cysteine 95, and cysteine 98 together coordinate Zn(2+).

It belongs to the YabA family. In terms of assembly, homotetramer. Interacts with both DnaA and DnaN, acting as a bridge between these two proteins. Requires Zn(2+) as cofactor.

Its subcellular location is the cytoplasm. The protein localises to the nucleoid. Functionally, involved in control of chromosome replication initiation. Inhibits the cooperative binding of DnaA to the oriC region, thus negatively regulating initiation of chromosome replication. Inhibits the ability of DnaA-ATP to form a helix on DNA; does not disassemble preformed DnaA-DNA helices. Decreases the residence time of DnaA on the chromosome at its binding sites (oriC, replication forks and promoter-binding sites). Tethers DnaA to the replication machinery via the DNA polymerase beta sliding clamp subunit (dnaN). Associates with oriC and other DnaA targets on the chromosome in a DnaA-dependent manner. The sequence is that of Replication initiation control protein YabA from Streptococcus suis (strain 98HAH33).